The sequence spans 409 residues: Tyrosine--tRNA ligase (409 aa).

Tyrosine 35 serves as a coordination point for L-tyrosine. Positions 40–49 (PTGSSLHVGH) match the 'HIGH' region motif. Tyrosine 168 and glutamine 172 together coordinate L-tyrosine. The 'KMSKS' region signature appears at 228 to 232 (KMGKT). Lysine 231 is a binding site for ATP. An S4 RNA-binding domain is found at 339-404 (IKVTDLFVQV…AGKKRVVRIV (66 aa)).

The protein belongs to the class-I aminoacyl-tRNA synthetase family. TyrS type 1 subfamily. As to quaternary structure, homodimer.

Its subcellular location is the cytoplasm. The enzyme catalyses tRNA(Tyr) + L-tyrosine + ATP = L-tyrosyl-tRNA(Tyr) + AMP + diphosphate + H(+). Catalyzes the attachment of tyrosine to tRNA(Tyr) in a two-step reaction: tyrosine is first activated by ATP to form Tyr-AMP and then transferred to the acceptor end of tRNA(Tyr). This is Tyrosine--tRNA ligase from Treponema pallidum (strain Nichols).